Here is a 153-residue protein sequence, read N- to C-terminus: Lysine-acyltransferase RtxC (153 aa).

H32 is an active-site residue.

It belongs to the RTX toxin acyltransferase family.

It localises to the cytoplasm. It carries out the reaction a fatty acyl-[ACP] + L-lysyl-[protein] = N(6)-(fatty acyl)-L-lysyl-[protein] + holo-[ACP] + H(+). Functionally, catalyzes fatty acylation of the protoxin (RtxA) at internal lysine residues, thereby converting it to the active toxin. The sequence is that of Lysine-acyltransferase RtxC (rtxC) from Vibrio cholerae serotype O1 (strain ATCC 39315 / El Tor Inaba N16961).